Reading from the N-terminus, the 193-residue chain is NADH-quinone oxidoreductase subunit B (193 aa).

Cysteine 72, cysteine 73, cysteine 137, and cysteine 167 together coordinate [4Fe-4S] cluster.

The protein belongs to the complex I 20 kDa subunit family. In terms of assembly, NDH-1 is composed of 14 different subunits. Subunits NuoB, C, D, E, F, and G constitute the peripheral sector of the complex. [4Fe-4S] cluster is required as a cofactor.

The protein localises to the cell inner membrane. It catalyses the reaction a quinone + NADH + 5 H(+)(in) = a quinol + NAD(+) + 4 H(+)(out). Functionally, NDH-1 shuttles electrons from NADH, via FMN and iron-sulfur (Fe-S) centers, to quinones in the respiratory chain. The immediate electron acceptor for the enzyme in this species is believed to be ubiquinone. Couples the redox reaction to proton translocation (for every two electrons transferred, four hydrogen ions are translocated across the cytoplasmic membrane), and thus conserves the redox energy in a proton gradient. The sequence is that of NADH-quinone oxidoreductase subunit B from Caulobacter vibrioides (strain ATCC 19089 / CIP 103742 / CB 15) (Caulobacter crescentus).